The primary structure comprises 282 residues: Pantothenate synthetase (282 aa).

Met26–His33 contributes to the ATP binding site. The Proton donor role is filled by His33. Gln57 lines the (R)-pantoate pocket. Gln57 serves as a coordination point for beta-alanine. Gly144–Asp147 is an ATP binding site. Gln150 provides a ligand contact to (R)-pantoate. ATP contacts are provided by residues Val173 and Leu181–Arg184.

This sequence belongs to the pantothenate synthetase family. Homodimer.

The protein localises to the cytoplasm. The enzyme catalyses (R)-pantoate + beta-alanine + ATP = (R)-pantothenate + AMP + diphosphate + H(+). The protein operates within cofactor biosynthesis; (R)-pantothenate biosynthesis; (R)-pantothenate from (R)-pantoate and beta-alanine: step 1/1. In terms of biological role, catalyzes the condensation of pantoate with beta-alanine in an ATP-dependent reaction via a pantoyl-adenylate intermediate. In Cupriavidus taiwanensis (strain DSM 17343 / BCRC 17206 / CCUG 44338 / CIP 107171 / LMG 19424 / R1) (Ralstonia taiwanensis (strain LMG 19424)), this protein is Pantothenate synthetase.